A 465-amino-acid chain; its full sequence is Methionine aminopeptidase 2-2 (465 aa).

Basic residues predominate over residues 1-11; sequence MGSKTPHNHRR. Residues 1–89 are disordered; it reads MGSKTPHNHR…KKKKNTKELE (89 aa). A compositionally biased stretch (acidic residues) spans 43–54; the sequence is GESEGGEDEDDD. A compositionally biased stretch (basic residues) spans 73 to 84; sequence RNKRKKKKKKKN. His-217 is a substrate binding site. Positions 238, 249, and 318 each coordinate a divalent metal cation. His-326 contacts substrate. Positions 351 and 446 each coordinate a divalent metal cation.

It belongs to the peptidase M24A family. Methionine aminopeptidase eukaryotic type 2 subfamily. Requires Co(2+) as cofactor. Zn(2+) is required as a cofactor. It depends on Mn(2+) as a cofactor. Fe(2+) serves as cofactor.

Its subcellular location is the cytoplasm. It carries out the reaction Release of N-terminal amino acids, preferentially methionine, from peptides and arylamides.. Its function is as follows. Cotranslationally removes the N-terminal methionine from nascent proteins. The N-terminal methionine is often cleaved when the second residue in the primary sequence is small and uncharged (Met-Ala-, Cys, Gly, Pro, Ser, Thr, or Val). The protein is Methionine aminopeptidase 2-2 of Ajellomyces capsulatus (strain G186AR / H82 / ATCC MYA-2454 / RMSCC 2432) (Darling's disease fungus).